The following is a 613-amino-acid chain: Ribosome-associated molecular chaperone SSB1 (613 aa).

A nucleotide binding domain (NBD) region spans residues 1–391 (MAEGVFQGAI…ILTGQSTSED (391 aa)). ATP-binding positions include 16–18 (TTY), Lys-73, 205–207 (GGT), 271–278 (ERAKRTLS), and Gly-342. The interval 392-402 (TKDLLLLDVAP) is inter-domain linker. The substrate binding domain (SBD) stretch occupies residues 403–613 (LSLGVGMQGD…RVVTKAMSSR (211 aa)). Residues 516-612 (SDEIEKMVNQ…KRVVTKAMSS (97 aa)) are lid domain (SBDalpha). The short motif at 574–582 (IESALSDAL) is the Nuclear export signal element.

It belongs to the heat shock protein 70 family. Ssb-type Hsp70 subfamily. Binds to ribosomes. Binds close to the ribosomal tunnel exit via contacts with both ribosomal proteins and rRNA. Directly interacts with nascent polypeptides. This interaction is dependent on the ribosome-associated complex (RAC). Interacts with SSE1. Interacts with FES1.

It is found in the cytoplasm. The catalysed reaction is ATP + H2O = ADP + phosphate + H(+). Its function is as follows. Ribosome-bound, Hsp70-type chaperone that assists in the cotranslational folding of newly synthesized proteins in the cytosol. Stimulates folding by interacting with nascent chains, binding to short, largely hydrophobic sequences exposed by unfolded proteins, thereby stabilizing longer, more slowly translated, and aggregation-prone nascent polypeptides and domains that cannot fold stably until fully synthesized. The Hsp70-protein substrate interaction depends on ATP-binding and on allosteric regulation between the NBD and the SBD. The ATP-bound state is characterized by a fast exchange rate of substrate (low affinity state), while in the ADP-bound state exchange is much slower (high affinity state). During the Hsp70 cycle, the chaperone switches between the ATP-bound state (open conformation) and the ADP-bound state (closed conformation) by major conformational rearrangements involving mainly the lid domain. Ssb cooperates with a specific Hsp40/Hsp70 co-chaperone termed the ribosome-associated complex (RAC), which stimulates the ATPase activity of the ribosome-associated pool of Ssbs and switches it to the high affinity substrate binding state. Hsp110 chaperone SSE1 and FES1 act as nucleotide exchange factors that cause substrate release. The protein is Ribosome-associated molecular chaperone SSB1 (SSB1) of Zygosaccharomyces rouxii (strain ATCC 2623 / CBS 732 / NBRC 1130 / NCYC 568 / NRRL Y-229).